A 237-amino-acid chain; its full sequence is Uridylate kinase (237 aa).

ATP is bound at residue 12 to 15 (KLSG). The segment at 20–25 (GEDGLG) is involved in allosteric activation by GTP. Gly-54 contributes to the UMP binding site. Residues Gly-55 and Arg-59 each coordinate ATP. UMP contacts are provided by residues Asp-74 and 135–142 (TGNPFFTT). Residues Thr-162, Tyr-168, and Asp-171 each contribute to the ATP site.

It belongs to the UMP kinase family. In terms of assembly, homohexamer.

The protein localises to the cytoplasm. The catalysed reaction is UMP + ATP = UDP + ADP. Its pathway is pyrimidine metabolism; CTP biosynthesis via de novo pathway; UDP from UMP (UMPK route): step 1/1. Its activity is regulated as follows. Allosterically activated by GTP. Inhibited by UTP. Functionally, catalyzes the reversible phosphorylation of UMP to UDP. In Haemophilus influenzae (strain PittGG), this protein is Uridylate kinase.